Here is a 211-residue protein sequence, read N- to C-terminus: MTEIQKLTNNKEIIAYLAEKFPLCFSLEGEAKPLKIGLFQDLAEALANDEKVSKTQLRQALRQYTSNWRYLHGCRAGAVRVDLNGEPAGILEQEHVEHAAAKLAEAKAKVAERRAVEKANNPKANKKRSVHHSGNKSENKKSAGKKFSNPRQVEQIFVNVDLANLQKGDVVRVKAGDKTTKAEILEVVKEGARVELENGLILTVSADRLFA.

Residues 112 to 148 form a disordered region; that stretch reads ERRAVEKANNPKANKKRSVHHSGNKSENKKSAGKKFS. The segment covering 124-134 has biased composition (basic residues); it reads ANKKRSVHHSG.

It belongs to the ProQ family.

It localises to the cytoplasm. Functionally, RNA chaperone with significant RNA binding, RNA strand exchange and RNA duplexing activities. In Histophilus somni (strain 2336) (Haemophilus somnus), this protein is RNA chaperone ProQ.